The chain runs to 476 residues: 3-isopropylmalate dehydratase large subunit (476 aa).

[4Fe-4S] cluster-binding residues include Cys-347, Cys-407, and Cys-410. The interval 418 to 442 (LAPGERSASTSNRNFEGRQGKGGRT) is disordered.

It belongs to the aconitase/IPM isomerase family. LeuC type 1 subfamily. As to quaternary structure, heterodimer of LeuC and LeuD. [4Fe-4S] cluster serves as cofactor.

The enzyme catalyses (2R,3S)-3-isopropylmalate = (2S)-2-isopropylmalate. It participates in amino-acid biosynthesis; L-leucine biosynthesis; L-leucine from 3-methyl-2-oxobutanoate: step 2/4. Functionally, catalyzes the isomerization between 2-isopropylmalate and 3-isopropylmalate, via the formation of 2-isopropylmaleate. The protein is 3-isopropylmalate dehydratase large subunit of Streptomyces coelicolor (strain ATCC BAA-471 / A3(2) / M145).